Reading from the N-terminus, the 151-residue chain is Globin CTT-VIII (151 aa).

The Globin domain maps to P4–E148. Residues H62 and H97 each contribute to the heme b site.

This sequence belongs to the globin family. In terms of assembly, homodimer.

This chain is Globin CTT-VIII (CTT-8), found in Chironomus thummi thummi (Midge).